A 184-amino-acid chain; its full sequence is Photosystem I assembly protein Ycf4 (184 aa).

Helical transmembrane passes span 22 to 42 and 57 to 77; these read FFWA…GTSS and IPFF…LFIS.

Belongs to the Ycf4 family.

The protein localises to the plastid. It is found in the chloroplast thylakoid membrane. Its function is as follows. Seems to be required for the assembly of the photosystem I complex. The polypeptide is Photosystem I assembly protein Ycf4 (Ceratophyllum demersum (Rigid hornwort)).